The following is a 597-amino-acid chain: Nuclear receptor subfamily 4 group A member 1 (597 aa).

Residues 1 to 22 (MPCIQAQYGTPATSPGPRDHLT) are disordered. The required for nuclear import stretch occupies residues 170–465 (RVWTEQLPKA…PGEGKLIFCS (296 aa)). A DNA-binding region (nuclear receptor) is located at residues 263–338 (EGRCAVCGDN…VGMVKEVVRT (76 aa)). 2 NR C4-type zinc fingers span residues 266-286 (CAVCGDNASCQHYGVRTCEGC) and 302-326 (CLANKDCPVDKRRRNRCQFCRFQKC). A required for binding NBRE-containing DNA region spans residues 267–353 (AVCGDNASCQ…RRGRLPSKPK (87 aa)). The tract at residues 298 to 360 (AKYICLANKD…KPKQPPDASP (63 aa)) is required for the interaction with RXRA. A Phosphoserine; by PKA modification is found at serine 340. A disordered region spans residues 341 to 360 (LKGRRGRLPSKPKQPPDASP). Serine 350 is subject to Phosphoserine; by PKA, RPS6KA1 and RPS6KA3. One can recognise an NR LBD domain in the interval 359–594 (SPTNLLTSLI…PIVDKIFMDT (236 aa)). Residues 520-543 (PRRVEELQNRIASCLKEHMAAVAG) are binds lipopolysaccharide. The tract at residues 583 to 594 (PPPIVDKIFMDT) is AF-2.

Belongs to the nuclear hormone receptor family. NR4 subfamily. Binds the NGFI-B response element (NBRE) as a monomer. Binds the Nur response element (NurRE), consisting of two inverse NBRE-related octanucleotide repeats separated by 6 base-pairs, as a dimer. Interacts (via N-terminus) with NLRP3 (via LRR repeat domain); the interaction is direct, requires binding of NR4A1/Nur77 to NBRE-containing dsDNA and lipopolysaccharide, and leads to non-canonical NLRP3 inflammasome activation. Interacts with GADD45GIP1. Interacts with STK11. Interacts with IFI27. Heterodimer (via DNA-binding domain) with RXRA (via C-terminus); DNA-binding of the heterodimer is enhanced by 9-cis retinoic acid. Competes for the RXRA interaction with EP300 and thereby attenuates EP300 mediated acetylation of RXRA. Interacts with NCOA1. Interacts with NCOA2. Interacts with NCOA3. The cofactor is Zn(2+). Post-translationally, phosphorylated at Ser-350 by RPS6KA1 and RPS6KA3 in response to mitogenic or stress stimuli. Phosphorylation of Ser-350 results in decrease in NBRE binding while phosphorylation of Ser-340 has little effect on it. In terms of processing, acetylated by p300/CBP, acetylation increases stability. Deacetylated by HDAC1. As to expression, expressed in lung, brain and superior cervical ganglia. High levels are seen in the adrenal tissue.

The protein localises to the nucleus. Its subcellular location is the cytoplasm. The protein resides in the cytosol. It is found in the mitochondrion. Functionally, orphan nuclear receptor. Binds the NGFI-B response element (NBRE) 5'-AAAGGTCA-3'. Binds 9-cis-retinoic acid outside of its ligand-binding (NR LBD) domain. Participates in energy homeostasis by sequestrating the kinase STK11 in the nucleus, thereby attenuating cytoplasmic AMPK activation. Regulates the inflammatory response in macrophages by regulating metabolic adaptations during inflammation, including repressing the transcription of genes involved in the citric acid cycle (TCA). Inhibits NF-kappa-B signaling by binding to low-affinity NF-kappa-B binding sites, such as at the IL2 promoter. May act concomitantly with NR4A2 in regulating the expression of delayed-early genes during liver regeneration. Plays a role in the vascular response to injury. In the cytosol, upon its detection of both bacterial lipopolysaccharide (LPS) and NBRE-containing mitochondrial DNA released by GSDMD pores during pyroptosis, it promotes non-canonical NLRP3 inflammasome activation by stimulating association of NLRP3 and NEK7. The chain is Nuclear receptor subfamily 4 group A member 1 (Nr4a1) from Rattus norvegicus (Rat).